We begin with the raw amino-acid sequence, 338 residues long: Flap endonuclease 1 (338 aa).

The interval 1–98 is N-domain; it reads MGTDIGDLLQ…ETLNRRKEVR (98 aa). Mg(2+) contacts are provided by Asp-27, Asp-80, Glu-152, Glu-154, Asp-173, Asp-175, and Asp-236. Positions 116 to 257 are I-domain; it reads AAYKYAQASS…TALKLIKKHG (142 aa). An interaction with PCNA region spans residues 330–338; sequence RQQTLDQWF.

The protein belongs to the XPG/RAD2 endonuclease family. FEN1 subfamily. As to quaternary structure, interacts with PCNA. PCNA stimulates the nuclease activity without altering cleavage specificity. Mg(2+) is required as a cofactor.

In terms of biological role, structure-specific nuclease with 5'-flap endonuclease and 5'-3' exonuclease activities involved in DNA replication and repair. During DNA replication, cleaves the 5'-overhanging flap structure that is generated by displacement synthesis when DNA polymerase encounters the 5'-end of a downstream Okazaki fragment. Binds the unpaired 3'-DNA end and kinks the DNA to facilitate 5' cleavage specificity. Cleaves one nucleotide into the double-stranded DNA from the junction in flap DNA, leaving a nick for ligation. Also involved in the base excision repair (BER) pathway. Acts as a genome stabilization factor that prevents flaps from equilibrating into structures that lead to duplications and deletions. Also possesses 5'-3' exonuclease activity on nicked or gapped double-stranded DNA. The chain is Flap endonuclease 1 from Methanosarcina barkeri (strain Fusaro / DSM 804).